Consider the following 180-residue polypeptide: Ribulose bisphosphate carboxylase small subunit, chloroplastic 2 (180 aa).

The transit peptide at 1–56 directs the protein to the chloroplast; sequence MASSVLSSAAVATVSRTPAQASMVAPFTGLKSTVGFPATKKNDDITSLASNGGRVQ.

Belongs to the RuBisCO small chain family. As to quaternary structure, heterohexadecamer of 8 large and 8 small subunits.

It is found in the plastid. It localises to the chloroplast. In terms of biological role, ruBisCO catalyzes two reactions: the carboxylation of D-ribulose 1,5-bisphosphate, the primary event in carbon dioxide fixation, as well as the oxidative fragmentation of the pentose substrate. Both reactions occur simultaneously and in competition at the same active site. Although the small subunit is not catalytic it is essential for maximal activity. The protein is Ribulose bisphosphate carboxylase small subunit, chloroplastic 2 of Spinacia oleracea (Spinach).